The chain runs to 227 residues: Cytochrome c oxidase subunit 2 (227 aa).

Residues 1–14 are Mitochondrial intermembrane-facing; that stretch reads MAYPFQLGLQDATS. The helical transmembrane segment at 15–45 threads the bilayer; the sequence is PIMEELMNFHDHTLMIVFLISSLVLYIISLM. The Mitochondrial matrix segment spans residues 46-59; it reads LTTKLTHTSTMDAQ. The helical transmembrane segment at 60-87 threads the bilayer; the sequence is EVETIWTILPAAILILIALPSLRILYMM. Topologically, residues 88 to 227 are mitochondrial intermembrane; that stretch reads DEINNPVLTV…YFENWSASMI (140 aa). Positions 161, 196, 198, 200, 204, and 207 each coordinate Cu cation. Glutamate 198 provides a ligand contact to Mg(2+). Tyrosine 218 is modified (phosphotyrosine).

This sequence belongs to the cytochrome c oxidase subunit 2 family. As to quaternary structure, component of the cytochrome c oxidase (complex IV, CIV), a multisubunit enzyme composed of 14 subunits. The complex is composed of a catalytic core of 3 subunits MT-CO1, MT-CO2 and MT-CO3, encoded in the mitochondrial DNA, and 11 supernumerary subunits COX4I, COX5A, COX5B, COX6A, COX6B, COX6C, COX7A, COX7B, COX7C, COX8 and NDUFA4, which are encoded in the nuclear genome. The complex exists as a monomer or a dimer and forms supercomplexes (SCs) in the inner mitochondrial membrane with NADH-ubiquinone oxidoreductase (complex I, CI) and ubiquinol-cytochrome c oxidoreductase (cytochrome b-c1 complex, complex III, CIII), resulting in different assemblies (supercomplex SCI(1)III(2)IV(1) and megacomplex MCI(2)III(2)IV(2)). Found in a complex with TMEM177, COA6, COX18, COX20, SCO1 and SCO2. Interacts with TMEM177 in a COX20-dependent manner. Interacts with COX20. Interacts with COX16. It depends on Cu cation as a cofactor.

Its subcellular location is the mitochondrion inner membrane. The catalysed reaction is 4 Fe(II)-[cytochrome c] + O2 + 8 H(+)(in) = 4 Fe(III)-[cytochrome c] + 2 H2O + 4 H(+)(out). Its function is as follows. Component of the cytochrome c oxidase, the last enzyme in the mitochondrial electron transport chain which drives oxidative phosphorylation. The respiratory chain contains 3 multisubunit complexes succinate dehydrogenase (complex II, CII), ubiquinol-cytochrome c oxidoreductase (cytochrome b-c1 complex, complex III, CIII) and cytochrome c oxidase (complex IV, CIV), that cooperate to transfer electrons derived from NADH and succinate to molecular oxygen, creating an electrochemical gradient over the inner membrane that drives transmembrane transport and the ATP synthase. Cytochrome c oxidase is the component of the respiratory chain that catalyzes the reduction of oxygen to water. Electrons originating from reduced cytochrome c in the intermembrane space (IMS) are transferred via the dinuclear copper A center (CU(A)) of subunit 2 and heme A of subunit 1 to the active site in subunit 1, a binuclear center (BNC) formed by heme A3 and copper B (CU(B)). The BNC reduces molecular oxygen to 2 water molecules using 4 electrons from cytochrome c in the IMS and 4 protons from the mitochondrial matrix. The polypeptide is Cytochrome c oxidase subunit 2 (MT-CO2) (Praomys tullbergi (Tullberg's soft-furred rat)).